The chain runs to 302 residues: NAD kinase 2 (302 aa).

Residue aspartate 78 is the Proton acceptor of the active site. NAD(+) is bound by residues 78–79 (DG), 152–153 (NE), aspartate 182, 193–198 (TAYALS), and alanine 217.

The protein belongs to the NAD kinase family. Requires a divalent metal cation as cofactor.

The protein localises to the cytoplasm. The catalysed reaction is NAD(+) + ATP = ADP + NADP(+) + H(+). Involved in the regulation of the intracellular balance of NAD and NADP, and is a key enzyme in the biosynthesis of NADP. Catalyzes specifically the phosphorylation on 2'-hydroxyl of the adenosine moiety of NAD to yield NADP. This Prochlorococcus marinus (strain MIT 9313) protein is NAD kinase 2.